Reading from the N-terminus, the 309-residue chain is Olfactory receptor 2AP1 (309 aa).

Topologically, residues 1–23 are extracellular; the sequence is MKNKTVLTEFILLGLTDVPELQV. Asparagine 3 carries an N-linked (GlcNAc...) asparagine glycan. Residues 24 to 47 form a helical membrane-spanning segment; it reads AVFTFLFLAYLLSILGNLTILILT. The Cytoplasmic segment spans residues 48 to 55; the sequence is LLDSHLQT. The helical transmembrane segment at 56 to 77 threads the bilayer; the sequence is PMYFFLRNFSFLEISFTNIFIP. At 78–98 the chain is on the extracellular side; it reads RVLISITTGNKSISFAGCFTQ. An N-linked (GlcNAc...) asparagine glycan is attached at asparagine 87. A disulfide bond links cysteine 95 and cysteine 187. The helical transmembrane segment at 99–118 threads the bilayer; it reads YFFAMFLGATEFYLLAAMSY. The Cytoplasmic portion of the chain corresponds to 119 to 137; sequence DRYVAICKPLHYTTIMSSR. Residues 138-156 traverse the membrane as a helical segment; the sequence is ICIQLIFCSWLGGLMAIIP. The Extracellular segment spans residues 157-193; that stretch reads TITLMSQQDFCASNRLNHYFCDYEPLLELSCSDTSLI. The helical transmembrane segment at 194-217 threads the bilayer; it reads EKVVFLVASVTLVVTLVLVILSYA. Over 218 to 234 the chain is Cytoplasmic; sequence FIIKTILKLPSAQQRTK. A helical transmembrane segment spans residues 235 to 257; that stretch reads AFSTCSSHMIVISLSYGSCMFMY. Over 258–270 the chain is Extracellular; it reads INPSAKEGDTFNK. A helical transmembrane segment spans residues 271 to 290; that stretch reads GVALLITSVAPLLNPFIYTL. The Cytoplasmic portion of the chain corresponds to 291 to 309; it reads RNQQVKQPFKDMVKKLLNL.

This sequence belongs to the G-protein coupled receptor 1 family.

It localises to the cell membrane. Functionally, odorant receptor. The chain is Olfactory receptor 2AP1 (OR2AP1) from Homo sapiens (Human).